The following is a 456-amino-acid chain: Adenylosuccinate lyase (456 aa).

N(6)-(1,2-dicarboxyethyl)-AMP is bound by residues 15 to 16 (RY), 90 to 92 (NHD), and 122 to 123 (TS). Histidine 171 serves as the catalytic Proton donor/acceptor. Glutamine 248 provides a ligand contact to N(6)-(1,2-dicarboxyethyl)-AMP. Serine 296 acts as the Proton donor/acceptor in catalysis. Residues serine 297, 302–304 (KVN), asparagine 310, arginine 336, and 341–345 (STVLR) contribute to the N(6)-(1,2-dicarboxyethyl)-AMP site.

It belongs to the lyase 1 family. Adenylosuccinate lyase subfamily. In terms of assembly, homotetramer.

The enzyme catalyses N(6)-(1,2-dicarboxyethyl)-AMP = fumarate + AMP. It catalyses the reaction (2S)-2-[5-amino-1-(5-phospho-beta-D-ribosyl)imidazole-4-carboxamido]succinate = 5-amino-1-(5-phospho-beta-D-ribosyl)imidazole-4-carboxamide + fumarate. It carries out the reaction (2S)-2-amino-2'-deoxyadenylo-succinate = dZMP + fumarate. It functions in the pathway purine metabolism; AMP biosynthesis via de novo pathway; AMP from IMP: step 2/2. Its pathway is purine metabolism; IMP biosynthesis via de novo pathway; 5-amino-1-(5-phospho-D-ribosyl)imidazole-4-carboxamide from 5-amino-1-(5-phospho-D-ribosyl)imidazole-4-carboxylate: step 2/2. It participates in purine metabolism. Its function is as follows. Catalyzes two reactions in de novo purine nucleotide biosynthesis. Catalyzes the breakdown of 5-aminoimidazole- (N-succinylocarboxamide) ribotide (SAICAR or 2-[5-amino-1-(5-phospho-beta-D-ribosyl)imidazole-4-carboxamido]succinate) to 5-aminoimidazole-4-carboxamide ribotide (AICAR or 5-amino-1-(5-phospho-beta-D-ribosyl)imidazole-4-carboxamide) and fumarate, and of adenylosuccinate (ADS or N(6)-(1,2-dicarboxyethyl)-AMP) to adenosine monophosphate (AMP) and fumarate. Functionally, (Microbial infection) Catalyzes the conversion of 2-amino-2'-deoxyadenylo-succinate to dZMP and fumarate, when the bacterium is infected by a phage that produces the substrate of this reaction, a step in the synthesis of dZTP (2-amino-2'-deoxyadenosine 5'-triphosphate), which is a nucleotide then used by the phage as a DNA polymerase substrate. This chain is Adenylosuccinate lyase, found in Vibrio cholerae serotype O1 (strain ATCC 39541 / Classical Ogawa 395 / O395).